We begin with the raw amino-acid sequence, 206 residues long: MGYRDVAKVGLGGPVGSGKTALVQQLVPRLDDAGYDLGVIANDIMTQEDAQRLQSSFAGQIEKDLIAGVETGACPHTGIREDPSMNLDKIDEFSESHPELDVVLIESGGDNLAATFNPELADYFIFVISVAEGDDIPRKRGPGITQADLLVINKTDLAPHVDVSLEVLQEDAMEVRGDNPTAFTNCKTGEGIDDIMDIIERSVLFA.

Residue 13–20 (GPVGSGKT) coordinates GTP.

It belongs to the SIMIBI class G3E GTPase family. UreG subfamily. As to quaternary structure, homodimer. UreD, UreF and UreG form a complex that acts as a GTP-hydrolysis-dependent molecular chaperone, activating the urease apoprotein by helping to assemble the nickel containing metallocenter of UreC. The UreE protein probably delivers the nickel.

The protein resides in the cytoplasm. Facilitates the functional incorporation of the urease nickel metallocenter. This process requires GTP hydrolysis, probably effectuated by UreG. The sequence is that of Urease accessory protein UreG from Haloquadratum walsbyi (strain DSM 16790 / HBSQ001).